A 1293-amino-acid polypeptide reads, in one-letter code: Period circadian protein homolog 1 (1293 aa).

The segment at Met-1–Thr-134 is disordered. Residues Met-1–Pro-151 are interaction with BTRC. Composition is skewed to low complexity over residues Asn-48–Ser-57 and Gly-64–Glu-115. Over residues Gln-116–Ala-132 the composition is skewed to polar residues. Thr-121 is subject to Phosphothreonine; by CSNK1E. Residues Ser-122 and Ser-126 each carry the phosphoserine; by CSNK1E modification. The short motif at Leu-138 to Leu-147 is the Nuclear export signal 1 element. PAS domains lie at Ile-208–Leu-275 and Tyr-348–Gln-414. The PAC domain maps to His-422–Pro-465. Residues Leu-489–Leu-498 carry the Nuclear export signal 2 motif. Disordered stretches follow at residues Leu-509 to Val-544 and Thr-647 to Val-697. 2 stretches are compositionally biased toward low complexity: residues Gly-513–Gly-533 and Ala-652–Ala-661. Positions Glu-596 to Ser-814 are required for phosphorylation by CSNK1E. Ser-660, Ser-662, and Ser-703 each carry phosphoserine. Disordered stretches follow at residues Gly-748 to Ala-771, Thr-808 to Thr-870, Ser-935 to Phe-1094, and Ser-1204 to Ser-1293. Residues Ala-750–Ala-768 show a composition bias toward pro residues. Ser-814 carries the post-translational modification Phosphoserine. The short motif at Ile-823–Arg-839 is the Nuclear localization signal element. Residues Gly-826–Thr-843 are compositionally biased toward basic residues. Composition is skewed to pro residues over residues Ser-856–Thr-870 and Pro-952–Pro-962. Residues Leu-969–Leu-982 show a composition bias toward polar residues. Phosphoserine is present on residues Ser-975 and Ser-976. The Nuclear export signal 3 motif lies at Leu-978–Leu-985. Over residues Leu-1032–Ser-1058 the composition is skewed to low complexity. The LXXLL motif lies at Leu-1039 to Leu-1043. Over residues Leu-1059–Glu-1073 the composition is skewed to gly residues. The segment covering Gly-1074–Ser-1091 has biased composition (low complexity). The tract at residues Ser-1145 to Ser-1293 is CRY binding domain. Residues Gly-1232–Asp-1250 are compositionally biased toward gly residues. Residues Ala-1255–Ser-1269 show a composition bias toward polar residues.

Homodimer. Component of the circadian core oscillator, which includes the CRY proteins, CLOCK or NPAS2, BMAL1 or BMAL2, CSNK1D and/or CSNK1E, TIMELESS, and the PER proteins. Interacts directly with TIMELESS, PER2, PER3, CRY1 and CRY2. Interacts with BMAL1 and CLOCK. Interacts with GPRASP1. Interacts (phosphorylated) with BTRC and FBXW11; the interactions trigger proteasomal degradation. Interacts with NONO and WDR5. Interacts with SFPQ. Interacts with USP2. Interacts with HNF4A. Post-translationally, phosphorylated on serine residues by CSNK1D, CSNK1E and probably also by CSNK1G2. Phosphorylation by CSNK1D or CSNK1E promotes nuclear location of PER proteins as well as ubiquitination and subsequent degradation. May be dephosphorylated by PP1. In terms of processing, ubiquitinated; requires phosphorylation by CSNK1E and interaction with BTRC and FBXW11. Deubiquitinated by USP2. In terms of tissue distribution, expressed in pancreas. In the CNS, highly expressed in the SCN, internal granular layer of granular cells of the olfactory bulb, tuberculum olfactorium, piriform cortex, gyrus dentatus of the hippocampus, cerebellum, pars tuberalis/median eminence, and pituitary, and moderately in the tenia tecta, caudate putamen, accumbens nucleus, spinal cord, superior and inferior colliculus and pineal gland.

The protein localises to the nucleus. The protein resides in the cytoplasm. Its function is as follows. Transcriptional repressor which forms a core component of the circadian clock. The circadian clock, an internal time-keeping system, regulates various physiological processes through the generation of approximately 24 hour circadian rhythms in gene expression, which are translated into rhythms in metabolism and behavior. It is derived from the Latin roots 'circa' (about) and 'diem' (day) and acts as an important regulator of a wide array of physiological functions including metabolism, sleep, body temperature, blood pressure, endocrine, immune, cardiovascular, and renal function. Consists of two major components: the central clock, residing in the suprachiasmatic nucleus (SCN) of the brain, and the peripheral clocks that are present in nearly every tissue and organ system. Both the central and peripheral clocks can be reset by environmental cues, also known as Zeitgebers (German for 'timegivers'). The predominant Zeitgeber for the central clock is light, which is sensed by retina and signals directly to the SCN. The central clock entrains the peripheral clocks through neuronal and hormonal signals, body temperature and feeding-related cues, aligning all clocks with the external light/dark cycle. Circadian rhythms allow an organism to achieve temporal homeostasis with its environment at the molecular level by regulating gene expression to create a peak of protein expression once every 24 hours to control when a particular physiological process is most active with respect to the solar day. Transcription and translation of core clock components (CLOCK, NPAS2, BMAL1, BMAL2, PER1, PER2, PER3, CRY1 and CRY2) plays a critical role in rhythm generation, whereas delays imposed by post-translational modifications (PTMs) are important for determining the period (tau) of the rhythms (tau refers to the period of a rhythm and is the length, in time, of one complete cycle). A diurnal rhythm is synchronized with the day/night cycle, while the ultradian and infradian rhythms have a period shorter and longer than 24 hours, respectively. Disruptions in the circadian rhythms contribute to the pathology of cardiovascular diseases, cancer, metabolic syndromes and aging. A transcription/translation feedback loop (TTFL) forms the core of the molecular circadian clock mechanism. Transcription factors, CLOCK or NPAS2 and BMAL1 or BMAL2, form the positive limb of the feedback loop, act in the form of a heterodimer and activate the transcription of core clock genes and clock-controlled genes (involved in key metabolic processes), harboring E-box elements (5'-CACGTG-3') within their promoters. The core clock genes: PER1/2/3 and CRY1/2 which are transcriptional repressors form the negative limb of the feedback loop and interact with the CLOCK|NPAS2-BMAL1|BMAL2 heterodimer inhibiting its activity and thereby negatively regulating their own expression. This heterodimer also activates nuclear receptors NR1D1/2 and RORA/B/G, which form a second feedback loop and which activate and repress BMAL1 transcription, respectively. Regulates circadian target genes expression at post-transcriptional levels, but may not be required for the repression at transcriptional level. Controls PER2 protein decay. Represses CRY2 preventing its repression on CLOCK/BMAL1 target genes such as FXYD5 and SCNN1A in kidney and PPARA in liver. Besides its involvement in the maintenance of the circadian clock, has an important function in the regulation of several processes. Participates in the repression of glucocorticoid receptor NR3C1/GR-induced transcriptional activity by reducing the association of NR3C1/GR to glucocorticoid response elements (GREs) by BMAL1:CLOCK. Plays a role in the modulation of the neuroinflammatory state via the regulation of inflammatory mediators release, such as CCL2 and IL6. In spinal astrocytes, negatively regulates the MAPK14/p38 and MAPK8/JNK MAPK cascades as well as the subsequent activation of NFkappaB. Coordinately regulates the expression of multiple genes that are involved in the regulation of renal sodium reabsorption. Can act as gene expression activator in a gene and tissue specific manner, in kidney enhances WNK1 and SLC12A3 expression in collaboration with CLOCK. Modulates hair follicle cycling. Represses the CLOCK-BMAL1 induced transcription of BHLHE40/DEC1. The polypeptide is Period circadian protein homolog 1 (Rattus norvegicus (Rat)).